The chain runs to 66 residues: Large ribosomal subunit protein uL29 (66 aa).

The protein belongs to the universal ribosomal protein uL29 family.

This Francisella philomiragia subsp. philomiragia (strain ATCC 25017 / CCUG 19701 / FSC 153 / O#319-036) protein is Large ribosomal subunit protein uL29.